The primary structure comprises 152 residues: Putative superoxide dismutase [Cu-Zn] (152 aa).

Histidine 43, histidine 45, and histidine 60 together coordinate Cu cation. A disulfide bond links cysteine 54 and cysteine 144. Histidine 60, histidine 68, histidine 77, and aspartate 80 together coordinate Zn(2+). Histidine 118 contributes to the Cu cation binding site.

Belongs to the Cu-Zn superoxide dismutase family. The cofactor is Cu cation. Requires Zn(2+) as cofactor.

The enzyme catalyses 2 superoxide + 2 H(+) = H2O2 + O2. In terms of biological role, destroys radicals which are normally produced within the cells and which are toxic to biological systems. This is Putative superoxide dismutase [Cu-Zn] (SOD) from Orgyia pseudotsugata (Douglas-fir tussock moth).